A 244-amino-acid polypeptide reads, in one-letter code: rRNA adenine N-6-methyltransferase (244 aa).

6 residues coordinate S-adenosyl-L-methionine: Asn11, Ile13, Gly38, Glu59, Asp84, and Asn101.

It belongs to the class I-like SAM-binding methyltransferase superfamily. rRNA adenine N(6)-methyltransferase family.

It carries out the reaction adenosine(2085) in 23S rRNA + 2 S-adenosyl-L-methionine = N(6)-dimethyladenosine(2085) in 23S rRNA + 2 S-adenosyl-L-homocysteine + 2 H(+). This protein produces a dimethylation of the adenine residue at position 2085 in 23S rRNA, resulting in reduced affinity between ribosomes and macrolide-lincosamide-streptogramin B antibiotics. The chain is rRNA adenine N-6-methyltransferase (ermM) from Staphylococcus epidermidis.